The sequence spans 489 residues: MSAYGLQRLYIGGDYVDATSGVTFDTFDPATGELLATVQQASEADIERAVQSAREGQRAWAAMTAMQRSRILRRAVDLLRERNDELAELEMRDTGKPIAETRAVDIVTGADVIEYYAGLATAIEGQQIPLRAESFVYTRREPLGVTAGIGAWNYPIQIACWKSAPALAAGNAMIFKPSEVTPLSASKLAEIYLEAGVPAGVFNVVQGDGRVGAMLSAHPGIAKISFTGGVETGKKVMSMAGGSSLKEVTMELGGKSPLVVFEDADLDRAADIAVTANFFSAGQVCTNGTRVFVHQSVQPAFEARVIERVKRIRVGKPSDPSTNFGPLASAAQLDKVLGFIESGKREGARLVAGGARIVEGDYARGQYVQPTVFSDCRDDMKIVREEIFGPVMSILSFVDEDDVIERANDTIYGLAAGVVTENLARAHRAIHRLEAGICWINTWGESPAEMPVGGYKQSGVGRENGITTLEHYTRIKSVQVELGKYQPVF.

Residues Thr-26 and Asp-93 each contribute to the K(+) site. 150-152 (GAW) contributes to the NAD(+) binding site. Lys-162 (charge relay system) is an active-site residue. 176 to 179 (KPSE) contacts NAD(+). Val-180 lines the K(+) pocket. 229 to 232 (GVET) lines the NAD(+) pocket. Leu-245 serves as a coordination point for K(+). The active-site Proton acceptor is the Glu-251. The NAD(+) site is built by Gly-253, Cys-285, and Glu-386. Residue Cys-285 is the Nucleophile of the active site. At Cys-285 the chain carries Cysteine sulfenic acid (-SOH). Lys-456 and Gly-459 together coordinate K(+). The Charge relay system role is filled by Glu-463.

Belongs to the aldehyde dehydrogenase family. As to quaternary structure, dimer of dimers. K(+) is required as a cofactor.

It carries out the reaction betaine aldehyde + NAD(+) + H2O = glycine betaine + NADH + 2 H(+). The protein operates within amine and polyamine biosynthesis; betaine biosynthesis via choline pathway; betaine from betaine aldehyde: step 1/1. Functionally, involved in the biosynthesis of the osmoprotectant glycine betaine. Catalyzes the irreversible oxidation of betaine aldehyde to the corresponding acid. This is Betaine aldehyde dehydrogenase from Paraburkholderia phymatum (strain DSM 17167 / CIP 108236 / LMG 21445 / STM815) (Burkholderia phymatum).